The following is a 321-amino-acid chain: Probable proline iminopeptidase (321 aa).

In terms of domain architecture, AB hydrolase-1 spans 35–296 (KPVVFLHGGP…IVVPDAGHSM (262 aa)). Catalysis depends on Ser110, which acts as the Nucleophile. The active site involves Asp266. His294 serves as the catalytic Proton donor.

This sequence belongs to the peptidase S33 family.

The protein resides in the cytoplasm. It carries out the reaction Release of N-terminal proline from a peptide.. Specifically catalyzes the removal of N-terminal proline residues from peptides. The chain is Probable proline iminopeptidase (pip) from Leptolyngbya boryana (Plectonema boryanum).